Reading from the N-terminus, the 319-residue chain is 4-hydroxy-3-methylbut-2-enyl diphosphate reductase (319 aa).

C18 serves as a coordination point for [4Fe-4S] cluster. (2E)-4-hydroxy-3-methylbut-2-enyl diphosphate-binding residues include H47 and H81. 2 residues coordinate dimethylallyl diphosphate: H47 and H81. H47 and H81 together coordinate isopentenyl diphosphate. C103 is a binding site for [4Fe-4S] cluster. H131 lines the (2E)-4-hydroxy-3-methylbut-2-enyl diphosphate pocket. H131 lines the dimethylallyl diphosphate pocket. H131 contacts isopentenyl diphosphate. E133 acts as the Proton donor in catalysis. T172 provides a ligand contact to (2E)-4-hydroxy-3-methylbut-2-enyl diphosphate. Position 202 (C202) interacts with [4Fe-4S] cluster. (2E)-4-hydroxy-3-methylbut-2-enyl diphosphate is bound by residues S230, S231, N232, and S275. Positions 230, 231, 232, and 275 each coordinate dimethylallyl diphosphate. The isopentenyl diphosphate site is built by S230, S231, N232, and S275.

The protein belongs to the IspH family. Requires [4Fe-4S] cluster as cofactor.

It carries out the reaction isopentenyl diphosphate + 2 oxidized [2Fe-2S]-[ferredoxin] + H2O = (2E)-4-hydroxy-3-methylbut-2-enyl diphosphate + 2 reduced [2Fe-2S]-[ferredoxin] + 2 H(+). The catalysed reaction is dimethylallyl diphosphate + 2 oxidized [2Fe-2S]-[ferredoxin] + H2O = (2E)-4-hydroxy-3-methylbut-2-enyl diphosphate + 2 reduced [2Fe-2S]-[ferredoxin] + 2 H(+). Its pathway is isoprenoid biosynthesis; dimethylallyl diphosphate biosynthesis; dimethylallyl diphosphate from (2E)-4-hydroxy-3-methylbutenyl diphosphate: step 1/1. It participates in isoprenoid biosynthesis; isopentenyl diphosphate biosynthesis via DXP pathway; isopentenyl diphosphate from 1-deoxy-D-xylulose 5-phosphate: step 6/6. In terms of biological role, catalyzes the conversion of 1-hydroxy-2-methyl-2-(E)-butenyl 4-diphosphate (HMBPP) into a mixture of isopentenyl diphosphate (IPP) and dimethylallyl diphosphate (DMAPP). Acts in the terminal step of the DOXP/MEP pathway for isoprenoid precursor biosynthesis. The sequence is that of 4-hydroxy-3-methylbut-2-enyl diphosphate reductase from Beijerinckia indica subsp. indica (strain ATCC 9039 / DSM 1715 / NCIMB 8712).